Here is a 431-residue protein sequence, read N- to C-terminus: Reticulon-like protein B17 (431 aa).

2 disordered regions span residues 1–110 (MEST…SEAV) and 126–152 (PPRK…SSSD). The segment covering 12–26 (TKSASRLQDSSNPPN) has biased composition (polar residues). Basic residues predominate over residues 126–138 (PPRKRKTNGRPKK). Residues 142–152 (SSAPPLCSSSD) show a composition bias toward polar residues. Residues 168 to 355 (ISDLVMWRDV…VTAFWNLTSI (188 aa)) form the Reticulon domain. A run of 4 helical transmembrane segments spans residues 177 to 197 (VAKS…SCFA), 202 to 222 (FSVF…SFLS), 286 to 306 (YGHL…SFTI), and 349 to 369 (FWNL…LVIF). Over residues 382-415 (EVEPVENEQEEETLPQEEETVPQEEETVPQEEEQ) the composition is skewed to acidic residues. Residues 382–422 (EVEPVENEQEEETLPQEEETVPQEEETVPQEEEQTQPSEER) are disordered.

It is found in the endoplasmic reticulum membrane. The sequence is that of Reticulon-like protein B17 (RTNLB17) from Arabidopsis thaliana (Mouse-ear cress).